A 306-amino-acid chain; its full sequence is Curved DNA-binding protein (306 aa).

Residues 5 to 69 (DYYAIMGVKP…QRRAEYDQMW (65 aa)) enclose the J domain.

It is found in the cytoplasm. The protein resides in the nucleoid. Functionally, DNA-binding protein that preferentially recognizes a curved DNA sequence. It is probably a functional analog of DnaJ; displays overlapping activities with DnaJ, but functions under different conditions, probably acting as a molecular chaperone in an adaptive response to environmental stresses other than heat shock. Lacks autonomous chaperone activity; binds native substrates and targets them for recognition by DnaK. Its activity is inhibited by the binding of CbpM. The polypeptide is Curved DNA-binding protein (Escherichia coli (strain 55989 / EAEC)).